Reading from the N-terminus, the 231-residue chain is Septum site-determining protein MinC (231 aa).

It belongs to the MinC family. Interacts with MinD and FtsZ.

Functionally, cell division inhibitor that blocks the formation of polar Z ring septums. Rapidly oscillates between the poles of the cell to destabilize FtsZ filaments that have formed before they mature into polar Z rings. Prevents FtsZ polymerization. The sequence is that of Septum site-determining protein MinC from Shigella flexneri.